The primary structure comprises 1485 residues: ABC multidrug transporter I (1485 aa).

Disordered regions lie at residues methionine 1 to serine 57 and lysine 75 to glycine 111. Positions serine 8–alanine 24 are enriched in polar residues. N-linked (GlcNAc...) asparagine glycosylation occurs at asparagine 12. The segment covering glycine 85–serine 95 has biased composition (basic and acidic residues). Residues asparagine 132, asparagine 335, and asparagine 451 are each glycosylated (N-linked (GlcNAc...) asparagine). An ABC transporter 1 domain is found at methionine 163 to proline 411. Helical transmembrane passes span phenylalanine 522 to tryptophan 542, glycine 556 to serine 576, isoleucine 600 to isoleucine 620, phenylalanine 623 to leucine 643, tyrosine 664 to isoleucine 684, glutamate 691 to valine 711, and phenylalanine 774 to threonine 794. The region spanning phenylalanine 846–alanine 1089 is the ABC transporter 2 domain. Glycine 882–threonine 889 contacts ATP. 5 consecutive transmembrane segments (helical) span residues tyrosine 1184–leucine 1204, alanine 1211–leucine 1231, leucine 1268–phenylalanine 1288, phenylalanine 1299–leucine 1319, and isoleucine 1325–isoleucine 1345. N-linked (GlcNAc...) asparagine glycosylation is found at asparagine 1396 and asparagine 1418. The helical transmembrane segment at leucine 1449–phenylalanine 1469 threads the bilayer.

This sequence belongs to the ABC transporter superfamily. ABCG family. PDR (TC 3.A.1.205) subfamily.

It localises to the cell membrane. The enzyme catalyses fluconazole(in) + ATP + H2O = fluconazole(out) + ADP + phosphate + H(+). Its activity is regulated as follows. The efflux inhibitor FK506 does not impair the transport activity. Its function is as follows. ABC efflux transporter that confers resistance to fluconazole (FLC) but shows no resistance to other azoles. Is also able to transport rhodamine 6G (R-6G), a known substrate for many ABC transporters. The chain is ABC multidrug transporter I from Aspergillus fumigatus (strain ATCC MYA-4609 / CBS 101355 / FGSC A1100 / Af293) (Neosartorya fumigata).